A 424-amino-acid polypeptide reads, in one-letter code: MLDIKLFANDLEGVKKSLASRNPALLTLVGEITELNKTYKELLTSVENMRAKRNELSKSVGILKQKDPAAAEEAMKEVSLIKTGMSEKENMLEEIKKKISNTMLNIPNMPDPSVTIGKDEKDNKEIRKDGAAPSFSFKPLDHHAVGEKLGILDFETAAVLSGSRFALLKGDGARLERALISYMLDKHAKKGYTEVVPPSIVNEEILIGTGQLPKFREDMYALEGEPKQFLISTAEIPLTNMNRGKVLQEAELPVKLTAGTPCFRKEAGTYGKDTRGLIRNHQFDKVELVMISNSNDSFNLLEAMTADAEDVLKGLGLAYRTVELCTGDMGFSSAKTYDIEVWMPSENKYREISSCSNCTSFQARRMNLRYKNAEGKIEFVHTLNGSGVAVGRALAAILENYQQEDGSVIVPEALRPYFGKDIIK.

233–235 (TAE) lines the L-serine pocket. Residue 264–266 (RKE) coordinates ATP. Residue E287 coordinates L-serine. Residue 351–354 (EISS) participates in ATP binding. L-serine is bound at residue S386.

This sequence belongs to the class-II aminoacyl-tRNA synthetase family. Type-1 seryl-tRNA synthetase subfamily. In terms of assembly, homodimer. The tRNA molecule binds across the dimer.

Its subcellular location is the cytoplasm. It carries out the reaction tRNA(Ser) + L-serine + ATP = L-seryl-tRNA(Ser) + AMP + diphosphate + H(+). It catalyses the reaction tRNA(Sec) + L-serine + ATP = L-seryl-tRNA(Sec) + AMP + diphosphate + H(+). It functions in the pathway aminoacyl-tRNA biosynthesis; selenocysteinyl-tRNA(Sec) biosynthesis; L-seryl-tRNA(Sec) from L-serine and tRNA(Sec): step 1/1. Functionally, catalyzes the attachment of serine to tRNA(Ser). Is also able to aminoacylate tRNA(Sec) with serine, to form the misacylated tRNA L-seryl-tRNA(Sec), which will be further converted into selenocysteinyl-tRNA(Sec). The chain is Serine--tRNA ligase from Elusimicrobium minutum (strain Pei191).